We begin with the raw amino-acid sequence, 420 residues long: ATP phosphoribosyltransferase regulatory subunit (420 aa).

Belongs to the class-II aminoacyl-tRNA synthetase family. HisZ subfamily. Heteromultimer composed of HisG and HisZ subunits.

The protein localises to the cytoplasm. Its pathway is amino-acid biosynthesis; L-histidine biosynthesis; L-histidine from 5-phospho-alpha-D-ribose 1-diphosphate: step 1/9. Required for the first step of histidine biosynthesis. May allow the feedback regulation of ATP phosphoribosyltransferase activity by histidine. The polypeptide is ATP phosphoribosyltransferase regulatory subunit (Bacillus thuringiensis (strain Al Hakam)).